The following is a 141-amino-acid chain: ATP synthase epsilon chain (141 aa).

This sequence belongs to the ATPase epsilon chain family. As to quaternary structure, F-type ATPases have 2 components, CF(1) - the catalytic core - and CF(0) - the membrane proton channel. CF(1) has five subunits: alpha(3), beta(3), gamma(1), delta(1), epsilon(1). CF(0) has three main subunits: a, b and c.

Its subcellular location is the cell inner membrane. Produces ATP from ADP in the presence of a proton gradient across the membrane. The polypeptide is ATP synthase epsilon chain (Methylobacillus flagellatus (strain ATCC 51484 / DSM 6875 / VKM B-1610 / KT)).